The following is an 890-amino-acid chain: Serine/threonine-protein kinase D3 (890 aa).

Phosphoserine is present on residues Ser6, Ser27, Ser37, Ser41, and Ser44. Residues Pro154–Cys204 form a Phorbol-ester/DAG-type 1 zinc finger. A phosphoserine mark is found at Ser213 and Ser216. The segment at Pro271–Cys321 adopts a Phorbol-ester/DAG-type 2 zinc-finger fold. The segment at Ser332–Phe371 is disordered. Ser364, Ser391, and Ser395 each carry phosphoserine. The PH domain occupies Thr416–Met532. Tyr426 is subject to Phosphotyrosine. The residue at position 442 (Ser442) is a Phosphoserine. Tyr457 carries the phosphotyrosine modification. Thr535 carries the phosphothreonine modification. Ser539 bears the Phosphoserine mark. Residues Ile576 to Leu832 enclose the Protein kinase domain. ATP is bound by residues Leu582–Val590 and Lys605. The active-site Proton acceptor is Asp699. Phosphoserine; by PKC is present on Ser731. The residue at position 735 (Ser735) is a Phosphoserine; by autocatalysis. Position 742 is a phosphotyrosine (Tyr742).

The protein belongs to the protein kinase superfamily. CAMK Ser/Thr protein kinase family. PKD subfamily. It depends on Mg(2+) as a cofactor. In terms of tissue distribution, ubiquitous.

It is found in the cytoplasm. The protein localises to the membrane. It carries out the reaction L-seryl-[protein] + ATP = O-phospho-L-seryl-[protein] + ADP + H(+). The catalysed reaction is L-threonyl-[protein] + ATP = O-phospho-L-threonyl-[protein] + ADP + H(+). With respect to regulation, activated by DAG and phorbol esters. Phorbol-ester/DAG-type domains 1 and 2 bind both DAG and phorbol ester with high affinity and mediate translocation to the cell membrane. Autophosphorylation of Ser-735 and phosphorylation of Ser-731 by PKC relieves auto-inhibition by the PH domain. In terms of biological role, converts transient diacylglycerol (DAG) signals into prolonged physiological effects, downstream of PKC. Involved in resistance to oxidative stress. This is Serine/threonine-protein kinase D3 (PRKD3) from Homo sapiens (Human).